The chain runs to 274 residues: Regulator of G-protein signaling rgs-11 (274 aa).

The RGS domain occupies 137–256 (SPGLLAASKY…LEDPLYLDLL (120 aa)).

In Caenorhabditis elegans, this protein is Regulator of G-protein signaling rgs-11 (rgs-11).